The primary structure comprises 1681 residues: MALPIKFHEHLQLPNAGIRVPNITFSNVTMESDKNIVVREMIGDQQQVVIIDLADTANPTRRPISADSVIMHPTAKILALKSGKTLQIFNIELKAKVKAHQNVEDVVYWKWISEKTIALVSDTAVYHWSIEGDAAPVKMFDRHQSLAGTQIINYRADAENKWLVLIGISAKDSRVVGSMQLYSTERKVSQPIEGHAACFVRFKVDGNQNPSNLFCFSVKTDNGGKLHVIEVGTPAAGNTPFQKKNVDVPYTADTAGDFPVSMQVSAKQGIIYLVTKQGYVHLYDVESGTRIYSNRISTDTVFVTCEYTATGGIMGINRKGQVLSVSIDEANLVPFVTNQLQNPDLALKLAVRCDLPGAEELFVRKFNLLFSNGQFGESAKVAASAPQGILRTPATIQKFQQCPSTGPGPSPLLQYFGILLDQGKLNKYETLELCRPVLAQGRKELITKWLNDQKLECCEELGDLIKPHDVNTALSVYLRGNVPHKVVQSFAETGQFDKIVMYAKRVGFQPDYLFQLRQILRNSNPDHGAKFAQLLVSESENGEPLADLSQIIDCFMEVQAVQPCTSFLLEVLKGDKPEEGHLQTRLLEMNLLAAPAVADAILANKMFSHYDRAAIGQLCEKAGLLQRALEHFTDLYDIKRTVVHTHLLKPDWLVGYFGSLSVEDSVECLKAMLTQNIRQNLQVVVQIASKYHEQLGADKLIEMFENHKSYEGLFYFLGSIVNFSQDPEVHFKYIQAATRTGQIKEVERICRESQCYDAERVKNFLKEAKLNDQLPLIIVCDRHNMVHDLVLYLYRNQLQKYIEVFVQKVNAARLPIVVGALLDVDCSEDAIKQLIINTRGKFDIDELVEEVEKRNRLKLLNHWLESKIQEGATDAATHNAMAKIYIDSNNNPERFLKENPYYDSKVVGKYCEKRDPHYAFLSYERGQCDAELINVCNENSLFKNLARYLVKRRDFTLWEQVLNEENVHRRQLIDQVVQTALSETQDPEDISVTVKAFMAADLPNELIELLEKIVLDNSAFSEHRNLQNLLILTAMRADRTRVMEYIQKLDNYDAPDIANIAITSELYEEAFAIFKKFDVNSSAINVLIENVNNLDRAYEFAEKCNQSDVWASLAKAQLQQNLVKEAVDSFIKADDPGAYMEVVNKCSQTEHWEDLVRYLQMARKKSRESYIETELVFALAKTGRLTELEEFIAGPNHAQIGQIGDRCFDNGMFDSAKILFNNVSNFAKLSVTLVRLGEYQGAVDAARKANSTKTWKQVCFSCVENGEFRLAQMCGLHIVVHADELEELINFYQDRGHFEELIALLEAALGLERAHMGMFTELAILYSKYKPEKMREHLELFWSRVNIPKVLRAAEQAHLWSELVFLYDKYEEYDNAALTMMQHPTESWREQHFKEVIAKVANVELYYKAMQFYLDYKPLLLNDLLTVLSPRLDHSRTVLFFNKLKQIPLVKPYLRQVQNLNNKAINEALNQLLIDEEDHAGLRSSIEAQDNFDNITLAQQLEKHPLVEFRRISAYLFKGNNRWKQSIELCKKDKLYKDAMEYAAESRNGELAEELLSFFLDEKLYDCFAASLYHCYDLLHPDVIMELAWKHKIMDYAMPYMIQVMRDYQTRLEKLERSEHERKEEKAEQQQNNGMTMEPQLMLTYGAPAPQMTYPGTTGGYGGQPAYGQPGQPGYNAPGFM.

WD40-like repeat regions lie at residues 22–65, 66–105, 106–147, 148–193, 194–255, 256–299, and 300–328; these read NITF…RPIS, ADSVIMHPTAKILALKSGKTLQIFNIELKAKVKAHQNVED, VVYW…QSLA, GTQI…QPIE, GHAA…ADTA, GDFP…ISTD, and TVFVTCEYTATGGIMGINRKGQVLSVSID. CHCR repeat units lie at residues 539-685, 688-830, 835-974, 981-1126, 1130-1271, 1276-1422, and 1425-1568; these read SENG…QVVV, ASKY…SEDA, IINT…QLID, LSET…VKEA, FIKA…FRLA, LHIV…LLLN, and LTVL…YDCF. The segment covering 1616-1628 has biased composition (basic and acidic residues); the sequence is ERSEHERKEEKAE. The disordered stretch occupies residues 1616 to 1635; it reads ERSEHERKEEKAEQQQNNGM.

This sequence belongs to the clathrin heavy chain family. As to quaternary structure, clathrin triskelions, composed of 3 heavy chains and 3 light chains, are the basic subunits of the clathrin coat. May interact with beta arrestin arr-1.

It localises to the cytoplasmic vesicle membrane. The protein localises to the membrane. It is found in the coated pit. Clathrin is the major protein of the polyhedral coat of coated pits and vesicles. May play a role in yolk protein clatherin-mediated endocytosis by oocytes during oogenesis. The protein is Probable clathrin heavy chain 1 (chc-1) of Caenorhabditis elegans.